The primary structure comprises 585 residues: BURP domain-containing protein 17 (585 aa).

The first 20 residues, 1–20 (MDRIFARFFCFLLIAAVSHA), serve as a signal peptide directing secretion. Positions 63 to 82 (GQRNYKSSVSHVAERSHRVD) are disordered. The BURP domain maps to 363 to 584 (FFLEKNLQQG…QPDAVVWTRR (222 aa)).

As to expression, expressed in leaves.

In Oryza sativa subsp. japonica (Rice), this protein is BURP domain-containing protein 17 (BURP17).